Reading from the N-terminus, the 188-residue chain is dITP/XTP pyrophosphatase (188 aa).

7–12 (TGNIGK) lines the substrate pocket. Residues Glu36 and Asp65 each contribute to the Mg(2+) site. Catalysis depends on Asp65, which acts as the Proton acceptor. Residues Ser66, 141-144 (FGYD), Lys164, and 169-170 (HR) contribute to the substrate site.

The protein belongs to the HAM1 NTPase family. Homodimer. Mg(2+) is required as a cofactor.

The catalysed reaction is XTP + H2O = XMP + diphosphate + H(+). The enzyme catalyses dITP + H2O = dIMP + diphosphate + H(+). It catalyses the reaction ITP + H2O = IMP + diphosphate + H(+). Its function is as follows. Pyrophosphatase that catalyzes the hydrolysis of nucleoside triphosphates to their monophosphate derivatives, with a high preference for the non-canonical purine nucleotides XTP (xanthosine triphosphate), dITP (deoxyinosine triphosphate) and ITP. Seems to function as a house-cleaning enzyme that removes non-canonical purine nucleotides from the nucleotide pool, thus preventing their incorporation into DNA/RNA and avoiding chromosomal lesions. The polypeptide is dITP/XTP pyrophosphatase (Methanopyrus kandleri (strain AV19 / DSM 6324 / JCM 9639 / NBRC 100938)).